The sequence spans 155 residues: FHA domain-containing protein FhaB (155 aa).

Residues 6–28 (LQLTRAGFLMLLWVFIWSVLRIL) traverse the membrane as a helical segment. Thr-36 is modified (phosphothreonine). An FHA domain is found at 83–132 (VLIGRADDSTLVLTDDYASTRHARLSMRGSEWYVEDLGSTNGTYLDRAKV).

In terms of processing, phosphorylated by PknB. Dephosphorylated by PstP.

The protein resides in the cell membrane. The sequence is that of FHA domain-containing protein FhaB (fhaB) from Mycobacterium tuberculosis (strain CDC 1551 / Oshkosh).